A 204-amino-acid chain; its full sequence is MSIMEYNGGSCVAMAGKNCVAIASDLRLGVQSISLTNNFPKVFAMGDKTYLGLTGLATDVQTLYELFRYKVNLYKFREERQIQPKTFANLVSSTLYEKRFGPYFSFPVVAGVSNDNTPFICGFDSIGCIDFAEDFIVSGTATEQLYGMCESVYEPNLEPDDLFETISQALLNAQDRDCISGWGCVVYVITADKCIKRLVKGRQD.

It belongs to the peptidase T1B family. The 26S proteasome consists of a 20S proteasome core and two 19S regulatory subunits. The 20S proteasome core is composed of 28 subunits that are arranged in four stacked rings, resulting in a barrel-shaped structure. The two end rings are each formed by seven alpha subunits, and the two central rings are each formed by seven beta subunits. The catalytic chamber with the active sites is on the inside of the barrel.

It localises to the cytoplasm. Its subcellular location is the nucleus. Functionally, non-catalytic component of the proteasome, a multicatalytic proteinase complex which is characterized by its ability to cleave peptides with Arg, Phe, Tyr, Leu, and Glu adjacent to the leaving group at neutral or slightly basic pH. The proteasome has an ATP-dependent proteolytic activity. The polypeptide is Probable proteasome subunit beta type-3 (pup3) (Schizosaccharomyces pombe (strain 972 / ATCC 24843) (Fission yeast)).